Reading from the N-terminus, the 674-residue chain is Sodium/myo-inositol cotransporter 2 (674 aa).

At 1–27 (MESSTSSPQPPLSDPLDPFPQRSLEPG) the chain is on the extracellular side. Residues 28–48 (DIAVLVLYFLFVLAVGLWSTV) traverse the membrane as a helical segment. Topologically, residues 49 to 56 (KTKRDTVK) are cytoplasmic. A helical membrane pass occupies residues 57-77 (GYFLAGGDMVWWPVGASLFAS). Residues 78-102 (NVGSGHFVGLAGSGAATGISVAAYE) are Extracellular-facing. A helical transmembrane segment spans residues 103-123 (FNGMFSVLMLAWIFLPIYIAG). Over 124–140 (QVTTMPEYLRRRFGGSR) the chain is Cytoplasmic. The helical transmembrane segment at 141–161 (IAITLAVLYLFIYIFTKISVD) threads the bilayer. At 162-180 (MYAGAIFIQQSLHLDLYLS) the chain is on the extracellular side. Residues 181-201 (VVGLLAVTALYTVAGGLAAVI) form a helical membrane-spanning segment. Residues 202–208 (YTDALQT) lie on the Cytoplasmic side of the membrane. A helical transmembrane segment spans residues 209–229 (LIMLVGALTLMGYSFAAVGGM). At 230–272 (EGLQEKYFLALPSNRSENSSCGLPREDAFHLFRDPLTSDLPWP) the chain is on the extracellular side. A helical membrane pass occupies residues 273–293 (GILFGMSIPSLWYWCTDQVIV). The Cytoplasmic segment spans residues 294 to 308 (QRSLAAKNLSHAKGG). The chain crosses the membrane as a helical span at residues 309 to 329 (SLMAAYLKVLPLFIMVFPGMV). Residues 330 to 375 (SRILFPDQVACADPETCQRVCNNPSGCSDIAYPKLVLELLPTGLRG) lie on the Extracellular side of the membrane. Residues 376–396 (LMMAVMVAALMSSLTSIFNSA) form a helical membrane-spanning segment. Residues 397 to 418 (STIFTMDLWNHVRPRASEKELM) are Cytoplasmic-facing. Residues 419–439 (IVGRVFVLLLVLVSVLWIPVV) form a helical membrane-spanning segment. Residues 440–446 (QASQGGQ) are Extracellular-facing. A helical transmembrane segment spans residues 447 to 467 (LFVYIQAISSYLQPPVAMVFV). Residues 468-479 (LGCFWKRANEKG) are Cytoplasmic-facing. The helical transmembrane segment at 480–500 (AFWGLVLGLLLGFIRLILDFI) threads the bilayer. Over 501 to 521 (YVEPACHQPDERPSVVKNVHY) the chain is Extracellular. Residues 522–542 (LYFSMILSSVTVLTVTVMSLL) form a helical membrane-spanning segment. The Cytoplasmic portion of the chain corresponds to 543 to 653 (TEPPSKEMIS…SIEENPVVKT (111 aa)). Residues 654–674 (LLDVNCLLCICCAFFLWGYFA) form a helical membrane-spanning segment.

It belongs to the sodium:solute symporter (SSF) (TC 2.A.21) family. In terms of tissue distribution, expressed in brain, lung and kidney. In the kidney, strongly expressed in the cortex, at the luminal side of proximal convoluted tubules and in BBMVs. Weaker expression observed in the medulla (at protein level).

The protein localises to the membrane. Its subcellular location is the apical cell membrane. It carries out the reaction myo-inositol(out) + 2 Na(+)(out) = myo-inositol(in) + 2 Na(+)(in). It catalyses the reaction 1D-chiro-inositol(out) + 2 Na(+)(out) = 1D-chiro-inositol(in) + 2 Na(+)(in). The catalysed reaction is D-glucose(out) + 2 Na(+)(out) = D-glucose(in) + 2 Na(+)(in). The enzyme catalyses D-xylose(out) + 2 Na(+)(out) = D-xylose(in) + 2 Na(+)(in). With respect to regulation, MI transport activity stimulated five-fold under 24 hour hypertonic shock conditions. MI inward currents were gradually inhibited as increasing amounts of phlorizin were added to the superfusion medium. When sodium is replaced by potassium, MI uptake is dramatically reduced and in the presence of L-fucose or D-chiro-inositol (DCI), the specific accumulation of tracer amounts of MI is also reduced. In terms of biological role, involved in the sodium-dependent cotransport of myo-inositol (MI) with a Na(+):MI stoichiometry of 2:1. Exclusively responsible for apical MI transport and absorption in intestine. Can also transport D-chiro-inositol (DCI) but not L-fucose. Exhibits stereospecific cotransport of both D-glucose and D-xylose. May induce apoptosis through the TNF-alpha, PDCD1 pathway. May play a role in the regulation of MI concentration in serum, involving reabsorption in at least the proximal tubule of the kidney. The protein is Sodium/myo-inositol cotransporter 2 of Oryctolagus cuniculus (Rabbit).